Here is a 447-residue protein sequence, read N- to C-terminus: UPF0210 protein LCK_00974 (447 aa).

Belongs to the UPF0210 family. Homodimer.

The sequence is that of UPF0210 protein LCK_00974 from Leuconostoc citreum (strain KM20).